Reading from the N-terminus, the 401-residue chain is Nodal homolog 3-C (401 aa).

Positions 1–18 (MAFLSLFLCLVFSSPLMA) are cleaved as a signal peptide. Residues 19-274 (MPPALQGRKA…KVNGFRRLRR (256 aa)) constitute a propeptide that is removed on maturation. N-linked (GlcNAc...) asparagine glycosylation is found at asparagine 168, asparagine 337, and asparagine 344. Intrachain disulfides connect cysteine 299–cysteine 365 and cysteine 328–cysteine 396.

It belongs to the TGF-beta family. In terms of assembly, monomer. The propeptide region interacts with bmp4 in a non-covalent manner. Expressed in the dorsal marginal region of late blastula, becoming restricted to the Spemann organizer at the early gastrula stage.

It localises to the secreted. Exhibits mesoderm-dorsalizing activity and neural-inducing activity, but lacks mesoderm-inducing activity. Regulates the expression of specific mesodermal and neural genes. Induces convergent extension movements at the embryonic midline by activating the fgf signaling pathway to induce t/bra expression in the organizer region. Acts with wnt11 to induce Spemann organizer cells and induce axis formation. The unprocessed protein antagonizes bmp-signaling. The chain is Nodal homolog 3-C from Xenopus tropicalis (Western clawed frog).